The following is a 148-amino-acid chain: Large ribosomal subunit protein bL9 (148 aa).

The protein belongs to the bacterial ribosomal protein bL9 family.

Its function is as follows. Binds to the 23S rRNA. The polypeptide is Large ribosomal subunit protein bL9 (Thermobifida fusca (strain YX)).